The following is a 96-amino-acid chain: UPF0166 protein aq_448 (96 aa).

The protein belongs to the UPF0166 family.

The polypeptide is UPF0166 protein aq_448 (Aquifex aeolicus (strain VF5)).